A 447-amino-acid polypeptide reads, in one-letter code: N-succinylarginine dihydrolase (447 aa).

Residues 19-28, N110, and 137-138 each bind substrate; these read AGLSFGNEAS and HR. Residue E174 is part of the active site. A substrate-binding site is contributed by R212. H248 is an active-site residue. Substrate contacts are provided by D250 and N359. C365 functions as the Nucleophile in the catalytic mechanism.

This sequence belongs to the succinylarginine dihydrolase family. In terms of assembly, homodimer.

It catalyses the reaction N(2)-succinyl-L-arginine + 2 H2O + 2 H(+) = N(2)-succinyl-L-ornithine + 2 NH4(+) + CO2. It participates in amino-acid degradation; L-arginine degradation via AST pathway; L-glutamate and succinate from L-arginine: step 2/5. In terms of biological role, catalyzes the hydrolysis of N(2)-succinylarginine into N(2)-succinylornithine, ammonia and CO(2). This Shigella boydii serotype 4 (strain Sb227) protein is N-succinylarginine dihydrolase.